The sequence spans 98 residues: NADH-ubiquinone oxidoreductase chain 4L (98 aa).

A run of 3 helical transmembrane segments spans residues 2 to 22 (PSIS…MLIF), 29 to 49 (SLLC…LTIL), and 61 to 81 (ILLL…LVTV).

This sequence belongs to the complex I subunit 4L family. Core subunit of respiratory chain NADH dehydrogenase (Complex I) which is composed of 45 different subunits.

Its subcellular location is the mitochondrion inner membrane. The enzyme catalyses a ubiquinone + NADH + 5 H(+)(in) = a ubiquinol + NAD(+) + 4 H(+)(out). In terms of biological role, core subunit of the mitochondrial membrane respiratory chain NADH dehydrogenase (Complex I) which catalyzes electron transfer from NADH through the respiratory chain, using ubiquinone as an electron acceptor. Part of the enzyme membrane arm which is embedded in the lipid bilayer and involved in proton translocation. The polypeptide is NADH-ubiquinone oxidoreductase chain 4L (MT-ND4L) (Eulemur mongoz (Mongoose lemur)).